Here is a 426-residue protein sequence, read N- to C-terminus: MKKDELIFKLIEQENNRQCEGIELIASENFVSPQVLKAAGSILTNKYAEGYPRKRYYGGCQIVDEIEQTAIDRLKHLFHAEWVNVQPHSGAQANMTVFLACLQPGDYFLGLGLSHGGHLSHGSPVNFSGLSYKALEYGTEKENGKINYQQLEYVAMEKIPKLIIAGASAYSRDWDYQRIRLIADKIGAIFMVDMAHPAGLIAAQLLDNPLHYAHIVTSTTHKTLRGPRGGIILMGKDFENPWGRTTTKGKIKMMSEILDSALFPGVQGGPLEHIIAAKAIAFYEALQPEYVVYQKQVKKNAQVMAKALNSTGYKIVSGGTDNHLMLVDLRSKFPTLSGKQAEVALVSADITVNKNMVPFDNRSPFLTSGLRFGTPAITTRGAKEPLMEEIVELIDTVLSNVDNDKIVSSVKKKVNILMKDYPLFAW.

(6S)-5,6,7,8-tetrahydrofolate is bound by residues Leu-113 and 117-119 (GHL). Lys-222 carries the post-translational modification N6-(pyridoxal phosphate)lysine. 363–365 (SPF) is a binding site for (6S)-5,6,7,8-tetrahydrofolate.

The protein belongs to the SHMT family. As to quaternary structure, homodimer. The cofactor is pyridoxal 5'-phosphate.

It localises to the cytoplasm. It catalyses the reaction (6R)-5,10-methylene-5,6,7,8-tetrahydrofolate + glycine + H2O = (6S)-5,6,7,8-tetrahydrofolate + L-serine. It functions in the pathway one-carbon metabolism; tetrahydrofolate interconversion. The protein operates within amino-acid biosynthesis; glycine biosynthesis; glycine from L-serine: step 1/1. In terms of biological role, catalyzes the reversible interconversion of serine and glycine with tetrahydrofolate (THF) serving as the one-carbon carrier. This reaction serves as the major source of one-carbon groups required for the biosynthesis of purines, thymidylate, methionine, and other important biomolecules. Also exhibits THF-independent aldolase activity toward beta-hydroxyamino acids, producing glycine and aldehydes, via a retro-aldol mechanism. This chain is Serine hydroxymethyltransferase, found in Azobacteroides pseudotrichonymphae genomovar. CFP2.